A 469-amino-acid chain; its full sequence is Phenolic glucoside malonyltransferase 1 (469 aa).

N-acetylmethionine is present on methionine 1. Histidine 169 functions as the Proton acceptor in the catalytic mechanism. An HXXXD motif motif is present at residues 169-173 (HAVLD). Residue 291-292 (ST) coordinates malonyl-CoA. The active-site Proton acceptor is aspartate 413. Positions 413–417 (DFGWG) match the DFGWG motif motif.

The protein belongs to the plant acyltransferase family. Phenolic glucoside malonyltransferase subfamily.

It catalyses the reaction a flavonol 3-O-beta-D-glucoside + malonyl-CoA = a flavonol 3-O-(6-O-malonyl-beta-D-glucoside) + CoA. The catalysed reaction is a flavonol 7-O-beta-D-glucoside + malonyl-CoA = a flavonol 7-O-(6-O-malonyl-beta-D-glucoside) + CoA. Malonyltransferase acting on xenobiotic glucosides. Has activity toward 2-Naphthol glucoside (2NAG), 1-Naphthol glucoside (1NAG), kaempferol 7-O-glucoside, kaempferol 3-O-glucoside, hydroxycoumarin glucosides, phenol-glucosides and isoflavone glucoside (daidzin), but not toward 4-coumaroyl glucoside, kaempferol 3,7-O-diglucoside, salicylic acid glucoside and phlorizin. In vivo, seems to be involved in the malonylation of 2-Naphthol glucoside while PMAT2 would be involved in the malonylation of 4-methylumbelliferone glucoside or 4-nitrophenyl glucoside. The sequence is that of Phenolic glucoside malonyltransferase 1 (PMAT1) from Arabidopsis thaliana (Mouse-ear cress).